We begin with the raw amino-acid sequence, 313 residues long: tRNA dimethylallyltransferase (313 aa).

14-21 (GPTASGKT) serves as a coordination point for ATP. 16–21 (TASGKT) contributes to the substrate binding site. Interaction with substrate tRNA stretches follow at residues 39–42 (DSAL) and 163–167 (QRIGR).

Belongs to the IPP transferase family. In terms of assembly, monomer. It depends on Mg(2+) as a cofactor.

The enzyme catalyses adenosine(37) in tRNA + dimethylallyl diphosphate = N(6)-dimethylallyladenosine(37) in tRNA + diphosphate. Its function is as follows. Catalyzes the transfer of a dimethylallyl group onto the adenine at position 37 in tRNAs that read codons beginning with uridine, leading to the formation of N6-(dimethylallyl)adenosine (i(6)A). The polypeptide is tRNA dimethylallyltransferase (Thiobacillus denitrificans (strain ATCC 25259 / T1)).